Here is a 1040-residue protein sequence, read N- to C-terminus: Multidrug resistance protein MdtB (1040 aa).

The next 12 membrane-spanning stretches (helical) occupy residues 16-36, 347-367, 369-389, 396-416, 440-460, 472-492, 537-557, 863-883, 888-908, 911-931, 968-988, and 998-1018; these read FIMR…AGII, LMMA…NIPA, IIPG…MVFL, LTLM…IVVI, IGFT…PLLF, FAIT…TLTP, WLTL…WVFI, LGST…VLGI, FIHP…ALLA, IAGS…IGIV, ILMT…STGV, and IGMV…TPVI.

This sequence belongs to the resistance-nodulation-cell division (RND) (TC 2.A.6) family. MdtB subfamily. As to quaternary structure, part of a tripartite efflux system composed of MdtA, MdtB and MdtC. MdtB forms a heteromultimer with MdtC.

It localises to the cell inner membrane. Its function is as follows. The MdtABC tripartite complex confers resistance against novobiocin and deoxycholate. This is Multidrug resistance protein MdtB from Escherichia coli O17:K52:H18 (strain UMN026 / ExPEC).